The sequence spans 249 residues: Eukaryotic translation initiation factor 3 subunit K (249 aa).

In terms of domain architecture, PCI spans 46 to 222; the sequence is FDCYANLALL…VKVPTNKENE (177 aa).

This sequence belongs to the eIF-3 subunit K family. In terms of assembly, component of the eukaryotic translation initiation factor 3 (eIF-3) complex.

It is found in the cytoplasm. Component of the eukaryotic translation initiation factor 3 (eIF-3) complex, which is involved in protein synthesis of a specialized repertoire of mRNAs and, together with other initiation factors, stimulates binding of mRNA and methionyl-tRNAi to the 40S ribosome. The eIF-3 complex specifically targets and initiates translation of a subset of mRNAs involved in cell proliferation. The sequence is that of Eukaryotic translation initiation factor 3 subunit K from Aspergillus fumigatus (strain CBS 144.89 / FGSC A1163 / CEA10) (Neosartorya fumigata).